We begin with the raw amino-acid sequence, 463 residues long: Probable transport protein HsrA (463 aa).

14 helical membrane-spanning segments follow: residues 10-30 (GLAWVAAMALFMQSLDATILN), 49-69 (MAIIAYSLAVALFIPLTAWAA), 82-102 (VFTFILGSVACAAASNLESLI), 107-127 (IQGIGGAFMMPVARLAIIQAV), 139-159 (MATAGLIGPILGPILGGWLVI), 165-185 (WIFLINIPIGALGILASGSVM), 197-217 (WTGFLLFALGLVGITLGLDLL), 225-245 (SVTYSILVVGILLLVTYCGYA), 267-287 (IIANIFIRLSASGVPFLLPLM), 298-318 (MSGWLLAPIALISVMLKILIG), 328-348 (TTLISSALLMAGSVISMAWLD), 354-374 (TWIICNLMWYGACMSIIFTSI), 393-413 (VLSIVQQVGIGFGIAVSSIIL), and 429-449 (AFSYTFLTSSLFVIALVWSLM).

It belongs to the major facilitator superfamily. EmrB family.

It localises to the cell inner membrane. The protein is Probable transport protein HsrA (hsrA) of Haemophilus influenzae (strain ATCC 51907 / DSM 11121 / KW20 / Rd).